Reading from the N-terminus, the 920-residue chain is MSTNKNHNNNTNNNDNNICINPHIVEFLNKQITNIKNRPGADIKTTSIYKKAIRSLNLYPLPVFSGKECEVLNGFGPSLTKKINDYLKTTSHPLYPKGPPTPLKSIYNRNNNNNDNNNNNNNNNNNNNNNNNNNNNNNNNNSPKKKIRKSKNNNTTSTISNTQSNLIGTESPSKNQNKQLERELKSKKKKQQSAILEQIVEEEDINFEIPTNENYYDYGSGSCFDNNDDNDDGYISSGINTTPDDLNKSFNFDFGSFDNGIPNYNNNNDNGGDNENNINSDIDSNKIKTTTSINDNHKEKYQKNNENYIHENEDNGDDVIVLISPIKTYKYGDMLNKSPSKFKSPSKLRSHNTTNTFNNSNFSNSDNDNNNNIRITTPLKNQNFNKFNDSIIFSPSISSPSPSKLSNYHKYLNNNNNNIKNTPISTSKKRKCNFSSPLLFSPFKYGVTSPFSPSKMKLKSPFKKRFKNDKSPSSSISKNKNSKSNDIVNNDFEDDDEVVNIQSESEINNNNNQFTSHNDNYNYSYNYNNNSNNINNNNNNDDDDDFDLTETEDEKDDYDKDDRTFSNLSVRLSFTEEDLAGVNIGESIINNSKLPKVIPSQIPPPTQSTQSTSTSTSTSKSKSKSTIKIKFKNIKCIIDNREVKSVTERDYICNKLNERGINAQVKKLELGDFVWVAIDEHDNEWLLNYIIERKRVDDLSSSIIDGRYKEQKFRLSKSGCDNIIYLIEGIVSNTINSSSQSQKKTWGTVNFSLSPDALATALVTTSICEGIIIKETKTIDNTIDYIVNITEYFKEKLLKNNNSGGGGGDEIIKFLFANKNTQCTLENFNQLNSKSKGLKLIEFFATQLIQIPGCSAEKAHSITQVYPTPMSLYLALKAIKDKESGESHFKDFTFGKNKRRFGQDVSEVIYNLYTNKKYLN.

Disordered stretches follow at residues Thr-90–Lys-190, Asn-265–His-297, Leu-335–Thr-376, Lys-457–Asn-490, Ser-505–Lys-560, and Pro-595–Ser-621. Low complexity-rich tracts occupy residues Asn-108–Ser-142 and Asn-152–Asn-165. The span at Leu-166–Lys-178 shows a compositional bias: polar residues. 2 stretches are compositionally biased toward low complexity: residues Asn-265–Ile-282 and His-351–Asn-372. The segment covering Lys-457–Lys-467 has biased composition (basic residues). 2 stretches are compositionally biased toward low complexity: residues Ser-471–Asn-490 and Ser-505–Asn-539. Acidic residues predominate over residues Asn-540–Asp-556. Over residues Gln-607–Lys-620 the composition is skewed to low complexity. Positions Lys-635 to Val-731 constitute an ERCC4 domain.

Belongs to the XPF family. Interacts with eme1. It depends on Mg(2+) as a cofactor.

It is found in the nucleus. Component of a DNA structure-specific endonuclease with substrate preference for branched DNA structures with a 5'-end at the branch nick. May be required in mitosis for the processing of stalled or collapsed replication fork intermediates. May be required in meiosis for the repair of meiosis-specific double strand breaks subsequent to single-end invasion (SEI). This Dictyostelium discoideum (Social amoeba) protein is Probable crossover junction endonuclease mus81 (mus81).